The primary structure comprises 878 residues: Protein argonaute 6 (878 aa).

Over residues 1-17 (METSSSLPLSPISIEPE) the composition is skewed to low complexity. The disordered stretch occupies residues 1-25 (METSSSLPLSPISIEPEQPSHRDYD). Positions 259 to 372 (PVIEFLKANQ…LPLEFCNLVS (114 aa)) constitute a PAZ domain. The Piwi domain maps to 541–851 (FILCILPERK…AAAQVAQFTK (311 aa)).

The protein belongs to the argonaute family. Ago subfamily. Expressed in roots, cotyledons and shoot meristematic region.

Its subcellular location is the nucleus. Involved in transcriptional gene silencing (TGS). Component of the RISC complex that associate with the small interfering RNA (siRNA) pathway involved in direct cytosine methylation at endogenous DNA repeats. Required for the accumulation of specific siRNAs derived from transgene and heterochromatin-related endogenous loci. Involved in RNA-directed DNA methylation (RdDM) at specific endogenous loci. Probably not required for the accumulation of siRNAs derived from transgene inverted repeats that induce post-transcriptional gene silencing (PTGS). Associates mainly with small RNAs of 24 nucleotide in length and preferentially recruits small RNAs with a 5' terminal adenosine. Targeted by turnip yellows virus (TuYV) protein P0 (via F-box-like domain) for probable proteasome degradation and thereby inactivating AGO6 function in RNA silencing. The sequence is that of Protein argonaute 6 (AGO6) from Arabidopsis thaliana (Mouse-ear cress).